The primary structure comprises 872 residues: Trichohyalin-like protein 1 (872 aa).

Residues 46–81 form the EF-hand domain; it reads CAIHAVERNLNLLNIDSNGAISFDEFVLAIFSFLNV. Positions 117 to 127 are enriched in polar residues; sequence QWTEGTSQTQD. Disordered stretches follow at residues 117–759, 774–813, and 830–872; these read QWTE…ERGA, LQQT…DSSD, and EFLP…APKQ. Basic and acidic residues-rich tracts occupy residues 142-155, 164-190, 218-235, 296-307, 324-348, 365-375, 399-435, and 486-505; these read SLEE…RVDP, LPVE…KVDQ, TKGE…DILA, GKDEPSSEHVDL, AAKD…ETRD, RVERKGVRGPE, EDKK…KDSE, and SGEK…KEDD. A compositionally biased stretch (polar residues) spans 538–570; it reads NSETSDLFVQGDSQSQTNPFRGSVQGSDSNNPE. 3 stretches are compositionally biased toward basic and acidic residues: residues 571–584, 592–608, and 664–684; these read TQKH…KRVQ, RGED…EHEG, and TKKD…KEED. 2 stretches are compositionally biased toward polar residues: residues 699–708 and 718–729; these read ENNAVSQKTC and SPQQLAGEQSLS. The segment covering 730–751 has biased composition (basic and acidic residues); that stretch reads TKEHDPSVSESGLEERMQRDQE. Polar residues-rich tracts occupy residues 774-793 and 801-812; these read LQQT…TASV and NQSSASLTNDSS. The span at 849–865 shows a compositional bias: basic and acidic residues; the sequence is LEDKQGRPQREELEPQK.

It belongs to the S-100 family.

This is Trichohyalin-like protein 1 (TCHHL1) from Bos taurus (Bovine).